Here is a 788-residue protein sequence, read N- to C-terminus: MPFHIGSGCLPATISNRRIYRIAWSDTPPEMSSWEKMKEFFCSTHQTEALECIWTICHPPAGTTREDVINRFELLRTLAYAGWEESIHSGQHGENYFCILDEDSQEILSVTLDDAGNYTVNCQGYSETHRLTLDTAQGEEGTGHAEGASGTFRTSFLPATTAPQTPAEYDAVWSAWRRAAPAEESRGRAAVVQKMRACLNNGNAVLNVGESGLTTLPDCLPAHITTLVIPDNNLTSLPALPPELRTLEVSGNQLTSLPVLPPGLLELSIFSNPLTHLPALPSGLCKLWIFGNQLTSLPVLPPGLQELSVSDNQLASLPALPSELCKLWAYNNQLTSLPMLPSGLQELSVSDNQLASLPTLPSELYKLWAYNNRLTSLPALPSGLKELIVSGNRLTSLPVLPSELKELMVSGNRLTSLPMLPSGLLSLSVYRNQLTRLPESLIHLSSETTVNLEGNPLSERTLQALREITSAPGYSGPIIRFDMAGASAPRETRALHLAAADWLVPAREGEPAPADRWHMFGQEDNADAFSLFLDRLSETENFIKDAGFKAQISSWLAQLAEDEALRANTFAMATEATSSCEDRVTFFLHQMKNVQLVHNAEKGQYDNDLAALVATGREMFRLGKLEQIAREKVRTLALVDEIEVWLAYQNKLKKSLGLTSVTSEMRFFDVSGVTVTDLQDAELQVKAAEKSEFREWILQWGPLHRVLERKAPERVNALREKQISDYEETYRMLSDTELRPSGLVGNTDAERTIGARAMESAKKTFLDGLRPLVEEMLGSYLNVQWRRN.

Residues M1–F481 are interaction with host membrane and with target proteins. LRR repeat units follow at residues H223–P242, E243–L264, L265–S282, G283–P302, G303–L324, C325–S342, G343–L364, Y365–S382, G383–L404, K405–S422, G423–S445, and S446–R466. Residues D482–E491 form a linker region. The interval T492–N788 is E3 ubiquitin-protein ligase catalytic domain. Residues A494–N788 form the NEL domain. C580 acts as the Glycyl thioester intermediate in catalysis.

This sequence belongs to the LRR-containing bacterial E3 ligase family. Post-translationally, ubiquitinated in the presence of host E1 ubiquitin-activating enzyme UBA1, E2 ubiquitin-conjugating enzyme UBE2D2 and ubiquitin.

It is found in the secreted. It localises to the host cytoplasm. The protein localises to the host apical cell membrane. It carries out the reaction S-ubiquitinyl-[E2 ubiquitin-conjugating enzyme]-L-cysteine + [acceptor protein]-L-lysine = [E2 ubiquitin-conjugating enzyme]-L-cysteine + N(6)-ubiquitinyl-[acceptor protein]-L-lysine.. With respect to regulation, exists in an autoinhibited state in the absence of substrate protein, due to interactions of the leucine-rich repeat domain with the catalytic domain. Is activated upon binding to a substrate protein. Effector proteins function to alter host cell physiology and promote bacterial survival in host tissues. This protein is an E3 ubiquitin ligase that interferes with host's ubiquitination pathway. This is E3 ubiquitin-protein ligase SspH2 (sspH2) from Salmonella typhimurium (strain LT2 / SGSC1412 / ATCC 700720).